A 438-amino-acid chain; its full sequence is Histidine--tRNA ligase (438 aa).

The protein belongs to the class-II aminoacyl-tRNA synthetase family. In terms of assembly, homodimer.

It localises to the cytoplasm. The catalysed reaction is tRNA(His) + L-histidine + ATP = L-histidyl-tRNA(His) + AMP + diphosphate + H(+). The chain is Histidine--tRNA ligase from Aromatoleum aromaticum (strain DSM 19018 / LMG 30748 / EbN1) (Azoarcus sp. (strain EbN1)).